The primary structure comprises 729 residues: Fatty acid oxidation complex subunit alpha (729 aa).

Residues 1–189 (MLYKGDTLYL…KIGLVDGVVK (189 aa)) are enoyl-CoA hydratase/isomerase. Position 296 (Asp296) interacts with substrate. Residues 311–729 (ETPKQAAVLG…ARPVGDLKTA (419 aa)) are 3-hydroxyacyl-CoA dehydrogenase. NAD(+)-binding positions include Met324, Asp343, 400-402 (VVE), Lys407, and Ser429. Catalysis depends on His450, which acts as the For 3-hydroxyacyl-CoA dehydrogenase activity. Residue Asn453 participates in NAD(+) binding. Positions 500 and 660 each coordinate substrate. The interval 708–729 (RHNEPYYPPVEPARPVGDLKTA) is disordered.

In the N-terminal section; belongs to the enoyl-CoA hydratase/isomerase family. This sequence in the C-terminal section; belongs to the 3-hydroxyacyl-CoA dehydrogenase family. In terms of assembly, heterotetramer of two alpha chains (FadB) and two beta chains (FadA).

The catalysed reaction is a (3S)-3-hydroxyacyl-CoA + NAD(+) = a 3-oxoacyl-CoA + NADH + H(+). It carries out the reaction a (3S)-3-hydroxyacyl-CoA = a (2E)-enoyl-CoA + H2O. The enzyme catalyses a 4-saturated-(3S)-3-hydroxyacyl-CoA = a (3E)-enoyl-CoA + H2O. It catalyses the reaction (3S)-3-hydroxybutanoyl-CoA = (3R)-3-hydroxybutanoyl-CoA. The catalysed reaction is a (3Z)-enoyl-CoA = a 4-saturated (2E)-enoyl-CoA. It carries out the reaction a (3E)-enoyl-CoA = a 4-saturated (2E)-enoyl-CoA. The protein operates within lipid metabolism; fatty acid beta-oxidation. Its function is as follows. Involved in the aerobic and anaerobic degradation of long-chain fatty acids via beta-oxidation cycle. Catalyzes the formation of 3-oxoacyl-CoA from enoyl-CoA via L-3-hydroxyacyl-CoA. It can also use D-3-hydroxyacyl-CoA and cis-3-enoyl-CoA as substrate. The chain is Fatty acid oxidation complex subunit alpha from Escherichia coli (strain SMS-3-5 / SECEC).